Here is a 253-residue protein sequence, read N- to C-terminus: Precorrin-4 C(11)-methyltransferase (253 aa).

It belongs to the precorrin methyltransferase family.

It carries out the reaction precorrin-4 + S-adenosyl-L-methionine = precorrin-5 + S-adenosyl-L-homocysteine. It participates in cofactor biosynthesis; adenosylcobalamin biosynthesis; cob(II)yrinate a,c-diamide from precorrin-2 (aerobic route): step 4/10. Its function is as follows. Catalyzes the methylation of C-11 in precorrin-4 to form precorrin-5. This Sinorhizobium sp protein is Precorrin-4 C(11)-methyltransferase (cobM).